We begin with the raw amino-acid sequence, 140 residues long: Putative pre-16S rRNA nuclease (140 aa).

This sequence belongs to the YqgF nuclease family.

The protein resides in the cytoplasm. Could be a nuclease involved in processing of the 5'-end of pre-16S rRNA. The sequence is that of Putative pre-16S rRNA nuclease from Yersinia enterocolitica serotype O:8 / biotype 1B (strain NCTC 13174 / 8081).